A 728-amino-acid polypeptide reads, in one-letter code: 1,4-alpha-glucan branching enzyme GlgB (728 aa).

Asp-405 acts as the Nucleophile in catalysis. Glu-458 acts as the Proton donor in catalysis.

The protein belongs to the glycosyl hydrolase 13 family. GlgB subfamily. As to quaternary structure, monomer.

It catalyses the reaction Transfers a segment of a (1-&gt;4)-alpha-D-glucan chain to a primary hydroxy group in a similar glucan chain.. It functions in the pathway glycan biosynthesis; glycogen biosynthesis. Its function is as follows. Catalyzes the formation of the alpha-1,6-glucosidic linkages in glycogen by scission of a 1,4-alpha-linked oligosaccharide from growing alpha-1,4-glucan chains and the subsequent attachment of the oligosaccharide to the alpha-1,6 position. The sequence is that of 1,4-alpha-glucan branching enzyme GlgB from Klebsiella pneumoniae subsp. pneumoniae (strain ATCC 700721 / MGH 78578).